We begin with the raw amino-acid sequence, 363 residues long: Cytochrome c oxidase subunit 2 (363 aa).

The tract at residues 1-23 (MTPRGPGRLQRLSQCRPQRGSGG) is disordered. Residues 1–41 (MTPRGPGRLQRLSQCRPQRGSGGPARGLRQLALAAMLGALA) form the signal peptide. The next 2 membrane-spanning stretches (helical) occupy residues 71–91 (LWIG…GLIF) and 118–138 (LVLT…TVVV). Positions 254, 295, 299, and 303 each coordinate Cu cation.

Belongs to the cytochrome c oxidase subunit 2 family. Cu cation serves as cofactor. It depends on heme as a cofactor.

The protein resides in the cell membrane. The catalysed reaction is 4 Fe(II)-[cytochrome c] + O2 + 8 H(+)(in) = 4 Fe(III)-[cytochrome c] + 2 H2O + 4 H(+)(out). Functionally, subunits I and II form the functional core of the enzyme complex. Electrons originating in cytochrome c are transferred via heme a and Cu(A) to the binuclear center formed by heme a3 and Cu(B). The chain is Cytochrome c oxidase subunit 2 (ctaC) from Mycobacterium bovis (strain ATCC BAA-935 / AF2122/97).